Reading from the N-terminus, the 1006-residue chain is SAC3 family protein A (1006 aa).

Disordered regions lie at residues 1–75 (MNHG…GPAT), 106–162 (TPYQ…PGSY), 183–239 (GYQS…TIAT), 266–326 (GTEK…AVST), 516–550 (TVTT…RWEP), 595–638 (GFKP…SDKD), and 650–690 (AGSA…GNLH). Composition is skewed to polar residues over residues 26-75 (GSQT…GPAT) and 106-115 (TPYQTSSDPH). Residues 116-140 (NYSNTGYSNYYSGYQQQPSQSYPQP) are compositionally biased toward low complexity. Residues 144-162 (YQNTGAPQPLSSFQNPGSY) are compositionally biased toward polar residues. Composition is skewed to polar residues over residues 269 to 282 (KLST…SQSF) and 313 to 326 (SHPP…AVST). A compositionally biased stretch (low complexity) spans 516–539 (TVTTTNVTNSESSSAQLSSLQNKS). A compositionally biased stretch (basic residues) spans 609–618 (SFQRPVKRQR). A compositionally biased stretch (basic and acidic residues) spans 653–680 (AEEKKRRDSRSKRFEKIQGHSRGNDLTK). A PCI domain is found at 804-978 (DLPEYNQCLS…DMLLDTKATS (175 aa)).

Belongs to the SAC3 family. In terms of assembly, interacts with EER5, SAC3B and CML20.

The protein localises to the nucleus. Functionally, component of the TREX-2 complex (transcription and export complex 2), a muliprotein complex that functions in docking export-competent ribonucleoprotein particles (mRNPs) to the nuclear entrance of the nuclear pore complex (nuclear basket). TREX-2 participates in mRNA export and accurate chromatin positioning in the nucleus by tethering genes to the nuclear periphery. This chain is SAC3 family protein A, found in Arabidopsis thaliana (Mouse-ear cress).